Reading from the N-terminus, the 525-residue chain is C6 finger transcription factor fsqA (525 aa).

The segment at residues 12–53 (CDRCRGQKLRCVGAGKPIPNSSSRLLRNEIPCDRCRRAKVEC) is a DNA-binding region (zn(2)-C6 fungal-type). Disordered regions lie at residues 80–142 (RSSS…LGDM), 204–260 (EWNS…EPAG), and 327–371 (RARS…ARSS). Residues 95-115 (PPNSLVTAASKPHPNSLSFNH) show a composition bias toward polar residues. The span at 327-337 (RARSQWSSLPE) shows a compositional bias: polar residues.

It is found in the nucleus. Its function is as follows. Transcription factor that regulates the expression of the gene cluster that mediates the biosynthesis of the isoquinoline alkaloids fumisoquin A, fumisoquin B and fumisoquin C; as well as small amounts of fumipyrrole as a shunt metabolite. The products of the cluster lead to a brown coloration and are important for growth and conidiation. This Aspergillus fumigatus (strain ATCC MYA-4609 / CBS 101355 / FGSC A1100 / Af293) (Neosartorya fumigata) protein is C6 finger transcription factor fsqA.